Here is a 1101-residue protein sequence, read N- to C-terminus: Zinc finger SWIM domain-containing protein 4 (1101 aa).

Residues 1–29 (MEPPAAKRSRGCPAGDEPGTGARRSRPEP) are disordered. Residues 134-171 (YHVSISFDRCKITSVSCGCDNRDLFYCAHVVALSLYRI) form an SWIM-type zinc finger.

This chain is Zinc finger SWIM domain-containing protein 4 (Zswim4), found in Mus musculus (Mouse).